A 682-amino-acid polypeptide reads, in one-letter code: DNA-directed RNA polymerase subunit beta' (682 aa).

Zn(2+) contacts are provided by cysteine 69, cysteine 71, cysteine 87, and cysteine 90. 3 residues coordinate Mg(2+): aspartate 489, aspartate 491, and aspartate 493.

This sequence belongs to the RNA polymerase beta' chain family. RpoC1 subfamily. In terms of assembly, in plastids the minimal PEP RNA polymerase catalytic core is composed of four subunits: alpha, beta, beta', and beta''. When a (nuclear-encoded) sigma factor is associated with the core the holoenzyme is formed, which can initiate transcription. Mg(2+) serves as cofactor. The cofactor is Zn(2+).

It localises to the plastid. The protein localises to the chloroplast. The enzyme catalyses RNA(n) + a ribonucleoside 5'-triphosphate = RNA(n+1) + diphosphate. DNA-dependent RNA polymerase catalyzes the transcription of DNA into RNA using the four ribonucleoside triphosphates as substrates. The chain is DNA-directed RNA polymerase subunit beta' from Brachypodium distachyon (Purple false brome).